Consider the following 379-residue polypeptide: Glucose-1-phosphate adenylyltransferase (379 aa).

Alpha-D-glucose 1-phosphate-binding positions include Gly164, Glu179–Lys180, and Ser190.

This sequence belongs to the bacterial/plant glucose-1-phosphate adenylyltransferase family. As to quaternary structure, homotetramer.

The catalysed reaction is alpha-D-glucose 1-phosphate + ATP + H(+) = ADP-alpha-D-glucose + diphosphate. It functions in the pathway glycan biosynthesis; glycogen biosynthesis. In terms of biological role, involved in the biosynthesis of ADP-glucose, a building block required for the elongation reactions to produce glycogen. Catalyzes the reaction between ATP and alpha-D-glucose 1-phosphate (G1P) to produce pyrophosphate and ADP-Glc. The polypeptide is Glucose-1-phosphate adenylyltransferase (Streptococcus agalactiae serotype III (strain NEM316)).